The sequence spans 334 residues: Mevalonate kinase (334 aa).

110 to 120 is a binding site for ATP; sequence PVGAGLGSSAA. D161 (proton acceptor) is an active-site residue.

Belongs to the GHMP kinase family. Mevalonate kinase subfamily. In terms of assembly, homodimer. Requires Mg(2+) as cofactor.

Its subcellular location is the cytoplasm. The catalysed reaction is (R)-mevalonate + ATP = (R)-5-phosphomevalonate + ADP + H(+). Its pathway is isoprenoid biosynthesis; isopentenyl diphosphate biosynthesis via mevalonate pathway; isopentenyl diphosphate from (R)-mevalonate: step 1/3. Its function is as follows. Catalyzes the phosphorylation of (R)-mevalonate (MVA) to (R)-mevalonate 5-phosphate (MVAP). Functions in the mevalonate (MVA) pathway leading to isopentenyl diphosphate (IPP), a key precursor for the biosynthesis of isoprenoid compounds such as archaeal membrane lipids. This is Mevalonate kinase from Thermococcus gammatolerans (strain DSM 15229 / JCM 11827 / EJ3).